The chain runs to 186 residues: Thymidine kinase (186 aa).

An ATP-binding site is contributed by 8–15 (GPMYSGKT). The active-site Proton acceptor is Glu-86. Residue Phe-118 coordinates substrate. Residues Cys-143 and Cys-146 each contribute to the Zn(2+) site. Residue 162–166 (IIEIG) participates in substrate binding. 2 residues coordinate Zn(2+): Cys-175 and Cys-178.

This sequence belongs to the thymidine kinase family.

It carries out the reaction thymidine + ATP = dTMP + ADP + H(+). This is Thymidine kinase (TK) from Choristoneura fumiferana (Spruce budworm moth).